A 236-amino-acid polypeptide reads, in one-letter code: Flagellar L-ring protein (236 aa).

The signal sequence occupies residues 1–16 (MRMRITAILAAGLLAG). Cys17 carries the N-palmitoyl cysteine lipid modification. A lipid anchor (S-diacylglycerol cysteine) is attached at Cys17. Residues 96-143 (ENETDRSRKNSSGFNLGASGESQTSDFAWSGDLEYGSNTKTEGDGKTE) form a disordered region. A compositionally biased stretch (polar residues) spans 105–122 (NSSGFNLGASGESQTSDF).

The protein belongs to the FlgH family. In terms of assembly, the basal body constitutes a major portion of the flagellar organelle and consists of four rings (L,P,S, and M) mounted on a central rod.

The protein resides in the cell outer membrane. It localises to the bacterial flagellum basal body. In terms of biological role, assembles around the rod to form the L-ring and probably protects the motor/basal body from shearing forces during rotation. The protein is Flagellar L-ring protein of Sinorhizobium medicae (strain WSM419) (Ensifer medicae).